A 631-amino-acid chain; its full sequence is Phosphomethylpyrimidine synthase (631 aa).

Substrate-binding positions include Asn239, Met268, Tyr297, His333, 353 to 355 (SRG), 394 to 397 (DGLR), and Glu433. His437 is a binding site for Zn(2+). Tyr460 provides a ligand contact to substrate. His501 is a Zn(2+) binding site. The [4Fe-4S] cluster site is built by Cys581, Cys584, and Cys589.

It belongs to the ThiC family. In terms of assembly, homodimer. It depends on [4Fe-4S] cluster as a cofactor.

It catalyses the reaction 5-amino-1-(5-phospho-beta-D-ribosyl)imidazole + S-adenosyl-L-methionine = 4-amino-2-methyl-5-(phosphooxymethyl)pyrimidine + CO + 5'-deoxyadenosine + formate + L-methionine + 3 H(+). It functions in the pathway cofactor biosynthesis; thiamine diphosphate biosynthesis. Its function is as follows. Catalyzes the synthesis of the hydroxymethylpyrimidine phosphate (HMP-P) moiety of thiamine from aminoimidazole ribotide (AIR) in a radical S-adenosyl-L-methionine (SAM)-dependent reaction. In Escherichia coli O6:H1 (strain CFT073 / ATCC 700928 / UPEC), this protein is Phosphomethylpyrimidine synthase.